We begin with the raw amino-acid sequence, 263 residues long: Endonuclease 8 (263 aa).

P2 acts as the Schiff-base intermediate with DNA in catalysis. E3 acts as the Proton donor in catalysis. Residue K53 is the Proton donor; for beta-elimination activity of the active site. DNA contacts are provided by Q70, R125, and N169. The FPG-type zinc finger occupies 229–263; sequence KVFHRDGEACERCGGIIEKTTLSSRPFYWCPHCQK. Residue R253 is the Proton donor; for delta-elimination activity of the active site.

The protein belongs to the FPG family. The cofactor is Zn(2+).

It carries out the reaction 2'-deoxyribonucleotide-(2'-deoxyribose 5'-phosphate)-2'-deoxyribonucleotide-DNA = a 3'-end 2'-deoxyribonucleotide-(2,3-dehydro-2,3-deoxyribose 5'-phosphate)-DNA + a 5'-end 5'-phospho-2'-deoxyribonucleoside-DNA + H(+). Involved in base excision repair of DNA damaged by oxidation or by mutagenic agents. Acts as a DNA glycosylase that recognizes and removes damaged bases. Has a preference for oxidized pyrimidines, such as thymine glycol, 5,6-dihydrouracil and 5,6-dihydrothymine. Has AP (apurinic/apyrimidinic) lyase activity and introduces nicks in the DNA strand. Cleaves the DNA backbone by beta-delta elimination to generate a single-strand break at the site of the removed base with both 3'- and 5'-phosphates. The protein is Endonuclease 8 of Salmonella paratyphi A (strain AKU_12601).